The sequence spans 515 residues: MSLTKKPVVLVILDGYGYREDSQDNAISAAKTPVMDSLWVNRPHTLIDASGLEVGLPDRQMGNSEVGHVNLGAGRIVYQDLTRLDVEIKERTFFENPVLTAAVDKAVAAGKAVHIMGLASPGGVHSHEDHILAMIELAAARGAEKIYLHAFLDGRDTPPRSAKASLEKFAAKFAEVGKGRIASIIGRYFAMDRDNRWDRVEQAYDLLTLAKGEYEAPNAVAGLEAAYARDENDEFVKATVIRGEGEASAAMEDGDALIFMNFRADRARQITRAFVNRDFEGFSRKKVVKFADFVMLTEYAADIRTACAYPPASLLNTFGEWMAKHNKTQLRISETEKYAHVTFFFNGGVEEPFPGEDRILINSPKVATYDLQPEMSSAELTEKLVGAINSGKYDAIICNYPNGDMVGHTGVFDAAVAAVEALDNCIAQVTRAVEAAGGQMLITADHGNAEQMRDPATGQAHTAHTNLPVPLIYVGDKAVKAVDGGKLSDIAPTLLTLMGMEIPQEMTGKPLFIVE.

Mn(2+)-binding residues include Asp14 and Ser64. Ser64 functions as the Phosphoserine intermediate in the catalytic mechanism. Residues His125, 155-156, Arg187, Arg193, 263-266, and Lys337 contribute to the substrate site; these read RD and RADR. Mn(2+) is bound by residues Asp404, His408, Asp445, His446, and His464.

Belongs to the BPG-independent phosphoglycerate mutase family. In terms of assembly, monomer. Requires Mn(2+) as cofactor.

It catalyses the reaction (2R)-2-phosphoglycerate = (2R)-3-phosphoglycerate. It functions in the pathway carbohydrate degradation; glycolysis; pyruvate from D-glyceraldehyde 3-phosphate: step 3/5. Catalyzes the interconversion of 2-phosphoglycerate and 3-phosphoglycerate. This Cronobacter sakazakii (strain ATCC BAA-894) (Enterobacter sakazakii) protein is 2,3-bisphosphoglycerate-independent phosphoglycerate mutase.